Consider the following 332-residue polypeptide: Ferredoxin--NADP reductase (332 aa).

Residues glutamate 35, glutamine 43, tyrosine 48, valine 88, phenylalanine 122, aspartate 286, and serine 326 each contribute to the FAD site.

Belongs to the ferredoxin--NADP reductase type 2 family. As to quaternary structure, homodimer. It depends on FAD as a cofactor.

The catalysed reaction is 2 reduced [2Fe-2S]-[ferredoxin] + NADP(+) + H(+) = 2 oxidized [2Fe-2S]-[ferredoxin] + NADPH. This is Ferredoxin--NADP reductase from Limosilactobacillus reuteri (strain DSM 20016) (Lactobacillus reuteri).